Consider the following 279-residue polypeptide: Diaminopimelate epimerase (279 aa).

Positions 11 and 63 each coordinate substrate. Cys72 functions as the Proton donor in the catalytic mechanism. Residues 73-74 (GN), Asn161, Asn194, and 212-213 (ER) each bind substrate. Cys221 acts as the Proton acceptor in catalysis. 222–223 (GT) contacts substrate.

The protein belongs to the diaminopimelate epimerase family. As to quaternary structure, homodimer.

It localises to the cytoplasm. It carries out the reaction (2S,6S)-2,6-diaminopimelate = meso-2,6-diaminopimelate. It functions in the pathway amino-acid biosynthesis; L-lysine biosynthesis via DAP pathway; DL-2,6-diaminopimelate from LL-2,6-diaminopimelate: step 1/1. In terms of biological role, catalyzes the stereoinversion of LL-2,6-diaminopimelate (L,L-DAP) to meso-diaminopimelate (meso-DAP), a precursor of L-lysine and an essential component of the bacterial peptidoglycan. In Moorella thermoacetica (strain ATCC 39073 / JCM 9320), this protein is Diaminopimelate epimerase.